A 108-amino-acid chain; its full sequence is Trp operon repressor homolog (108 aa).

Residues 59–82 (QRQISQLLGVGVATITRGSNELKS) mediate DNA binding.

The protein belongs to the TrpR family. Homodimer.

Its subcellular location is the cytoplasm. In terms of biological role, this protein is an aporepressor. When complexed with L-tryptophan it binds the operator region of the trp operon and prevents the initiation of transcription. The sequence is that of Trp operon repressor homolog from Aliivibrio fischeri (strain ATCC 700601 / ES114) (Vibrio fischeri).